Reading from the N-terminus, the 272-residue chain is Tryptophan synthase alpha chain (272 aa).

Residues glutamate 49 and aspartate 60 each act as proton acceptor in the active site.

This sequence belongs to the TrpA family. Tetramer of two alpha and two beta chains.

It carries out the reaction (1S,2R)-1-C-(indol-3-yl)glycerol 3-phosphate + L-serine = D-glyceraldehyde 3-phosphate + L-tryptophan + H2O. Its pathway is amino-acid biosynthesis; L-tryptophan biosynthesis; L-tryptophan from chorismate: step 5/5. The alpha subunit is responsible for the aldol cleavage of indoleglycerol phosphate to indole and glyceraldehyde 3-phosphate. The protein is Tryptophan synthase alpha chain of Polaromonas naphthalenivorans (strain CJ2).